Consider the following 275-residue polypeptide: Polyamine aminopropyltransferase (275 aa).

Residues 2 to 235 (ELWFTEKQTK…GLWTFTIGSK (234 aa)) enclose the PABS domain. Residue Gln31 participates in S-methyl-5'-thioadenosine binding. Spermidine is bound by residues His62 and Asp86. Residues Glu106 and 137 to 138 (DG) contribute to the S-methyl-5'-thioadenosine site. Residue Asp155 is the Proton acceptor of the active site. 155–158 (DSTE) contacts spermidine. Pro162 is a binding site for S-methyl-5'-thioadenosine.

This sequence belongs to the spermidine/spermine synthase family. In terms of assembly, homodimer or homotetramer.

The protein resides in the cytoplasm. It carries out the reaction S-adenosyl 3-(methylsulfanyl)propylamine + putrescine = S-methyl-5'-thioadenosine + spermidine + H(+). Its pathway is amine and polyamine biosynthesis; spermidine biosynthesis; spermidine from putrescine: step 1/1. Catalyzes the irreversible transfer of a propylamine group from the amino donor S-adenosylmethioninamine (decarboxy-AdoMet) to putrescine (1,4-diaminobutane) to yield spermidine. The sequence is that of Polyamine aminopropyltransferase from Bacillus cereus (strain ATCC 10987 / NRS 248).